We begin with the raw amino-acid sequence, 387 residues long: MRLVKKNVIINGIYEAGVRYPEPANISYLWNFGFFSLVCLIIQLVSGILLAMHYSAHVDLAFNSIERLVREVDFGWLLRYVHANGASFFFIVVYVHMLRGLYFGSYQKPNAMLWVSGVVIFLLLIITGFLGYVLPWGQMSYWAATVITNLVTVIPVVGEDIVIWLWGGFNVDNPTLNRFFSLHYLCPFIIVGLVGLHIIFLRENGSTNPLGVKSNVDQIPFTPYFTIKDLFSFMIFLVLFFAFVFFAPNYLGHPDNYLMADSNVTPAHIVPEWYLLPFYAMLRSIPNKVLGVLALVLAIVVLAFLPFLTISEVRSSYFRKIHKHLFWSFLALCFFLGFLGSQPAAAPYLTCGLYSTILYFVYILVLFPYIYMVEKVIIKSILKTNKK.

Transmembrane regions (helical) follow at residues 32–52 (FGFF…LLAM), 76–98 (WLLR…VHML), 113–133 (LWVS…LGYV), 179–199 (FFSL…LHII), 225–245 (FTIK…AFVF), 290–310 (LGVL…FLTI), 325–345 (LFWS…QPAA), and 353–373 (LYST…IYMV). Heme b contacts are provided by His-82 and His-96. Heme b is bound by residues His-183 and His-197.

The protein belongs to the cytochrome b family. As to quaternary structure, the main subunits of complex b-c1 are: cytochrome b, cytochrome c1 and the Rieske protein. Requires heme b as cofactor.

The protein resides in the mitochondrion inner membrane. Its function is as follows. Component of the ubiquinol-cytochrome c reductase complex (complex III or cytochrome b-c1 complex) that is part of the mitochondrial respiratory chain. The b-c1 complex mediates electron transfer from ubiquinol to cytochrome c. Contributes to the generation of a proton gradient across the mitochondrial membrane that is then used for ATP synthesis. The polypeptide is Cytochrome b (cytB) (Dictyostelium citrinum (Slime mold)).